We begin with the raw amino-acid sequence, 364 residues long: MDRAALLALPSLCALWAAVLSLLPCGTQGNWMWLGIASFGVPEKLGCADLPLNSRQKELCKRKPYLLPSIREGARLGIQECRSQFRHERWNCMVATTTSTQLATAPLFGYELSSGTKETAFIYAIMAAGLVHSVTRSCSAGNMTECSCDTTLQNGGSPSEGWHWGGCSDDVQYGMWFSRKFLDLPIRNTTGKESRVLLAMNLHNNEAGRQAVAKLMSVDCRCHGVSGSCAVKTCWKTMSSFEKIGHFLKDKYENSIQISDKTKRKMRRREKDQRQTPILKDDLLYVHKSPNYCVENKKLGIPGTQGRECNRTSGGADGCNLLCCGRGYNTHVVRHVERCECKFIWCCYVRCRRCESMTDVHTCK.

The signal sequence occupies residues 1–29; sequence MDRAALLALPSLCALWAAVLSLLPCGTQG. 3 cysteine pairs are disulfide-bonded: Cys-81-Cys-92, Cys-138-Cys-146, and Cys-148-Cys-167. Asn-142 carries N-linked (GlcNAc...) asparagine glycosylation. The N-linked (GlcNAc...) asparagine glycan is linked to Asn-188. 8 disulfides stabilise this stretch: Cys-220/Cys-234, Cys-222/Cys-229, Cys-293/Cys-324, Cys-309/Cys-319, Cys-323/Cys-363, Cys-339/Cys-354, Cys-341/Cys-351, and Cys-346/Cys-347. The O-palmitoleoyl serine; by PORCN moiety is linked to residue Ser-226. Residue Asn-310 is glycosylated (N-linked (GlcNAc...) asparagine).

This sequence belongs to the Wnt family. Post-translationally, palmitoleoylation is required for efficient binding to frizzled receptors. Depalmitoleoylation leads to Wnt signaling pathway inhibition.

The protein localises to the secreted. It is found in the extracellular space. Its subcellular location is the extracellular matrix. In terms of biological role, ligand for members of the frizzled family of seven transmembrane receptors. Probable developmental protein. May be a signaling molecule which affects the development of discrete regions of tissues. Is likely to signal over only few cell diameters. In Mus musculus (Mouse), this protein is Protein Wnt-16 (Wnt16).